The sequence spans 214 residues: Large ribosomal subunit protein uL3 (214 aa).

The interval G131 to P155 is disordered. Position 153 is an N5-methylglutamine (Q153).

Belongs to the universal ribosomal protein uL3 family. As to quaternary structure, part of the 50S ribosomal subunit. Forms a cluster with proteins L14 and L19. Post-translationally, methylated by PrmB.

Functionally, one of the primary rRNA binding proteins, it binds directly near the 3'-end of the 23S rRNA, where it nucleates assembly of the 50S subunit. This is Large ribosomal subunit protein uL3 from Neisseria meningitidis serogroup C (strain 053442).